Here is a 157-residue protein sequence, read N- to C-terminus: 3-hydroxyacyl-[acyl-carrier-protein] dehydratase FabZ (157 aa).

H58 is an active-site residue.

The protein belongs to the thioester dehydratase family. FabZ subfamily.

The protein resides in the cytoplasm. It catalyses the reaction a (3R)-hydroxyacyl-[ACP] = a (2E)-enoyl-[ACP] + H2O. Functionally, involved in unsaturated fatty acids biosynthesis. Catalyzes the dehydration of short chain beta-hydroxyacyl-ACPs and long chain saturated and unsaturated beta-hydroxyacyl-ACPs. In Rhizorhabdus wittichii (strain DSM 6014 / CCUG 31198 / JCM 15750 / NBRC 105917 / EY 4224 / RW1) (Sphingomonas wittichii), this protein is 3-hydroxyacyl-[acyl-carrier-protein] dehydratase FabZ.